A 273-amino-acid chain; its full sequence is tRNA (guanine-N(7)-)-methyltransferase (273 aa).

The tract at residues 1 to 32 is disordered; sequence MSATAKKSAAQLQREEEEARKKLKRLSKQGGV. Residues glycine 88, 111 to 112, 150 to 151, and cysteine 170 each bind S-adenosyl-L-methionine; these read EI and NC. Aspartate 173 is an active-site residue. 248–250 is an S-adenosyl-L-methionine binding site; sequence TEE.

It belongs to the class I-like SAM-binding methyltransferase superfamily. TrmB family. Forms a complex with trm82.

Its subcellular location is the nucleus. It carries out the reaction guanosine(46) in tRNA + S-adenosyl-L-methionine = N(7)-methylguanosine(46) in tRNA + S-adenosyl-L-homocysteine. It functions in the pathway tRNA modification; N(7)-methylguanine-tRNA biosynthesis. Catalyzes the formation of N(7)-methylguanine at position 46 (m7G46) in tRNA. This Schizosaccharomyces pombe (strain 972 / ATCC 24843) (Fission yeast) protein is tRNA (guanine-N(7)-)-methyltransferase (trm8).